Consider the following 466-residue polypeptide: Alpha-1A adrenergic receptor (466 aa).

Topologically, residues 1–25 (MVFLSGNASDSSNCTHPPAPVNISK) are extracellular. Residues Asn7, Asn13, and Asn22 are each glycosylated (N-linked (GlcNAc...) asparagine). A helical membrane pass occupies residues 26–51 (AILLGVILGGLILFGVLGNILVILSV). Residues 52–63 (ACHRHLHSVTHY) lie on the Cytoplasmic side of the membrane. The chain crosses the membrane as a helical span at residues 64-89 (YIVNLAVADLLLTSTVLPFSAIFEIL). At 90-99 (GYWAFGRVFC) the chain is on the extracellular side. A helical transmembrane segment spans residues 100–122 (NIWAAVDVLCCTASIISLCVISI). Residues 123–143 (DRYIGVSYPLRYPTIVTQRRG) lie on the Cytoplasmic side of the membrane. The helical transmembrane segment at 144 to 168 (LRALLCVWAFSLVISVGPLFGWRQP) threads the bilayer. Topologically, residues 169–181 (APDDETICQINEE) are extracellular. A helical membrane pass occupies residues 182-205 (PGYVLFSALGSFYVPLTIILAMYC). Residues 206-272 (RVYVVAKRES…KFSREKKAAK (67 aa)) lie on the Cytoplasmic side of the membrane. A helical membrane pass occupies residues 273–297 (TLGIVVGCFVLCWLPFFLVMPIGSF). At 298–304 (FPDFKPP) the chain is on the extracellular side. The helical transmembrane segment at 305-329 (ETVFKIVFWLGYLNSCINPIIYPCS) threads the bilayer. At 330-466 (SQEFKKAFQN…ISLSENGEEV (137 aa)) the chain is on the cytoplasmic side. The short motif at 334–349 (KKAFQNVLKIQCLRRK) is the Nuclear localization signal element. A lipid anchor (S-palmitoyl cysteine) is attached at Cys345.

It belongs to the G-protein coupled receptor 1 family. Adrenergic receptor subfamily. ADRA1A sub-subfamily. In terms of assembly, homo- and heterooligomer. Heterooligomerizes with ADRA1B homooligomers in cardiac myocytes. Interacts with CAVIN4. In terms of tissue distribution, abundant in liver, vas deferens, brain, and aorta, but not in heart.

It is found in the nucleus membrane. The protein localises to the cell membrane. The protein resides in the cytoplasm. It localises to the membrane. Its subcellular location is the caveola. Functionally, this alpha-adrenergic receptor mediates its action by association with G proteins that activate a phosphatidylinositol-calcium second messenger system. Its effect is mediated by G(q) and G(11) proteins. Nuclear ADRA1A-ADRA1B heterooligomers regulate phenylephrine (PE)-stimulated ERK signaling in cardiac myocytes. The sequence is that of Alpha-1A adrenergic receptor (ADRA1A) from Oryctolagus cuniculus (Rabbit).